The primary structure comprises 522 residues: Sorting nexin-1 (522 aa).

The interval Met1–Gln142 is disordered. Phosphoserine is present on residues Ser32 and Ser39. Over residues Glu35–Asp45 the composition is skewed to acidic residues. Residues Thr41 and Thr48 each carry the phosphothreonine modification. Ser58 and Ser72 each carry phosphoserine. The segment covering Glu132 to Gln142 has biased composition (acidic residues). One can recognise a PX domain in the interval Phe143–Arg272. The a 1,2-diacyl-sn-glycero-3-phospho-(1D-myo-inositol-3-phosphate) site is built by Arg186, Ser188, and Lys214. At Ser188 the chain carries Phosphoserine. Lys237 bears the N6-acetyllysine mark. A 1,2-diacyl-sn-glycero-3-phospho-(1D-myo-inositol-3-phosphate) is bound at residue Arg238. Phosphoserine is present on Ser280. The segment at Gly281–Met298 is membrane-binding amphipathic helix. In terms of domain architecture, BAR spans Met302–Ser522.

Belongs to the sorting nexin family. Predominantly forms heterodimers with BAR domain-containing sorting nexins SNX5, SNX6 and SNX32; can self-associate to form homodimers. The heterodimers are proposed to self-assemble into helical arrays on the membrane to stabilize and expand local membrane curvature underlying endosomal tubule formation. Thought to be a component of the originally described retromer complex (also called SNX-BAR retromer) which is a pentamer containing the heterotrimeric retromer cargo-selective complex (CSC), also described as vacuolar protein sorting subcomplex (VPS) and a heterodimeric membrane-deforming subcomplex formed between SNX1 or SNX2 and SNX5 or SNX6 (also called SNX-BAR subcomplex); the respective CSC and SNX-BAR subcomplexes associate with low affinity. Interacts with SNX5, SNX6, SNX32, VPS26A, VPS29, VPS35, DRD5, DENND5A, KALRN, RHOG (GDP-bound form). The interaction with SNX2 is reported controversially. Interacts with DNAJC13; prevented by presence of HGS. Interacts with HGS.

The protein resides in the endosome membrane. Its subcellular location is the golgi apparatus. The protein localises to the trans-Golgi network membrane. It localises to the early endosome membrane. It is found in the cell projection. The protein resides in the lamellipodium. Its function is as follows. Involved in several stages of intracellular trafficking. Interacts with membranes containing phosphatidylinositol 3-phosphate (PtdIns(3P)) or phosphatidylinositol 3,5-bisphosphate (PtdIns(3,5)P2). Acts in part as component of the retromer membrane-deforming SNX-BAR subcomplex. The SNX-BAR retromer mediates retrograde transport of cargo proteins from endosomes to the trans-Golgi network (TGN) and is involved in endosome-to-plasma membrane transport for cargo protein recycling. The SNX-BAR subcomplex functions to deform the donor membrane into a tubular profile called endosome-to-TGN transport carrier (ETC). Can sense membrane curvature and has in vitro vesicle-to-membrane remodeling activity. Involved in retrograde endosome-to-TGN transport of lysosomal enzyme receptors (IGF2R, M6PR and SORT1). Plays a role in targeting ligand-activated EGFR to the lysosomes for degradation after endocytosis from the cell surface and release from the Golgi. Involvement in retromer-independent endocytic trafficking of P2RY1 and lysosomal degradation of protease-activated receptor-1/F2R. Promotes KALRN- and RHOG-dependent but retromer-independent membrane remodeling such as lamellipodium formation; the function is dependent on GEF activity of KALRN. Required for endocytosis of DRD5 upon agonist stimulation but not for basal receptor trafficking. The chain is Sorting nexin-1 (SNX1) from Bos taurus (Bovine).